Consider the following 148-residue polypeptide: Nucleoside diphosphate kinase 1 (148 aa).

Residues K9, F57, R85, T91, R102, and N112 each coordinate ATP. The active-site Pros-phosphohistidine intermediate is the H115.

The protein belongs to the NDK family. Requires Mg(2+) as cofactor.

It carries out the reaction a 2'-deoxyribonucleoside 5'-diphosphate + ATP = a 2'-deoxyribonucleoside 5'-triphosphate + ADP. It catalyses the reaction a ribonucleoside 5'-diphosphate + ATP = a ribonucleoside 5'-triphosphate + ADP. Major role in the synthesis of nucleoside triphosphates other than ATP. The ATP gamma phosphate is transferred to the NDP beta phosphate via a ping-pong mechanism, using a phosphorylated active-site intermediate. This Nicotiana tabacum (Common tobacco) protein is Nucleoside diphosphate kinase 1.